The chain runs to 80 residues: Type VII secretion system accessory factor EsaB (80 aa).

This sequence belongs to the EsaB family.

It localises to the cytoplasm. Its function is as follows. Seems to regulate secreted factors that contribute to the establishment of persistent infections in the host. This Staphylococcus aureus (strain COL) protein is Type VII secretion system accessory factor EsaB.